The chain runs to 172 residues: MILGDRDLKYYLEKKWILVDPLTEDSVRENGIDMRVGGEIARFKNVDRPFEEGMNPDDFFVRERGNEFVIWPNEHVLMVTEEYLRLPQDIMAFVNMRSSFARLGLLVPPTIVDAGFEGQLTIEVMGSGFPVKIRRGTRFLHLIFAKTLTPVENPYKGKYQGQRGVTIPKFTK.

DCTP contacts are provided by residues R97 to R102 and D113. The Proton donor/acceptor role is filled by E123. DCTP contacts are provided by Y155 and Q162.

Belongs to the dCTP deaminase family. As to quaternary structure, homotrimer.

It catalyses the reaction dCTP + H2O + H(+) = dUTP + NH4(+). The protein operates within pyrimidine metabolism; dUMP biosynthesis; dUMP from dCTP (dUTP route): step 1/2. Functionally, catalyzes the deamination of dCTP to dUTP. The chain is dCTP deaminase from Metallosphaera sedula (strain ATCC 51363 / DSM 5348 / JCM 9185 / NBRC 15509 / TH2).